The following is a 158-amino-acid chain: SsrA-binding protein (158 aa).

Residues 132–158 are disordered; it reads KKTHDKRETEKKRDWNREKARLMRDKG. Residues 136–158 are compositionally biased toward basic and acidic residues; the sequence is DKRETEKKRDWNREKARLMRDKG.

This sequence belongs to the SmpB family.

It is found in the cytoplasm. Functionally, required for rescue of stalled ribosomes mediated by trans-translation. Binds to transfer-messenger RNA (tmRNA), required for stable association of tmRNA with ribosomes. tmRNA and SmpB together mimic tRNA shape, replacing the anticodon stem-loop with SmpB. tmRNA is encoded by the ssrA gene; the 2 termini fold to resemble tRNA(Ala) and it encodes a 'tag peptide', a short internal open reading frame. During trans-translation Ala-aminoacylated tmRNA acts like a tRNA, entering the A-site of stalled ribosomes, displacing the stalled mRNA. The ribosome then switches to translate the ORF on the tmRNA; the nascent peptide is terminated with the 'tag peptide' encoded by the tmRNA and targeted for degradation. The ribosome is freed to recommence translation, which seems to be the essential function of trans-translation. This Brucella anthropi (strain ATCC 49188 / DSM 6882 / CCUG 24695 / JCM 21032 / LMG 3331 / NBRC 15819 / NCTC 12168 / Alc 37) (Ochrobactrum anthropi) protein is SsrA-binding protein.